Consider the following 618-residue polypeptide: MDLKTAVFNAARDGKLKLLQKLLENKSDREVLKLMAEKTNGATPLLMASRYGHLELVEFLMECCCAPVELGGSVNFDGEVIEGAPPLWAASAAGHLKVVQSLLGHGASVNNTTLTNSTPLRAACFDGHLDIVRYLVEHQADLEVANRHGHTCLMISCYKGHREIAQFLLEKGADVNRRSVKGNTALHDCAESGSLEIMKMLLKFGASMEKDGYGMTPLLSASVTGHTNIVDFLTAHPQTGLAERISALELLGATFVDKKRDLLGALQYWKRAMELRHSEADCMRREEPLEPEPAYDCSREVSTAEELDGLIADPDDMRMQALLIRERILGPAHPDTSYYIRYRGAVYADSGNFERCIRLWKYALDMQQSNLEPLSPMTASSLLSFAELFSFMLQDRAKGLLGAGVSFQQLMEILCRSVLEIERAVKQPRPSPDPDPAQLSKLLSIILHLICLLEKLPCSPEQDQHKKETIYRFLKLQACGRNGFSPLHLAVDHNTTCVGRYPVCKFPSLQVASVLLECGADVNSRDLDDNSPLHVAASNNHPDIMKLLISGGTHFDSTNALQQTACDLLDHTQLAKSLIQPINHTTLQCLAARAIIRHRLVYRGSIPERLEAFVLLHR.

ANK repeat units lie at residues 2–31, 40–70, 82–111, 115–144, 148–177, 181–210, and 213–243; these read DLKT…DREV, NGAT…PVEL, EGAP…SVNN, TNST…DLEV, HGHT…DVNR, KGNT…SMEK, and YGMT…GLAE. TPR repeat units follow at residues 245–279 and 337–370; these read ISAL…RHSE and SYYI…QQSN. ANK repeat units follow at residues 482-524 and 528-557; these read NGFS…DVNS and DDNS…HFDS.

This sequence belongs to the fem-1 family. As to quaternary structure, component of a CRL2 E3 ubiquitin-protein ligase complex, also named ECS (Elongin BC-CUL2/5-SOCS-box protein) complex.

Its pathway is protein modification; protein ubiquitination. Substrate-recognition component of a Cul2-RING (CRL2) E3 ubiquitin-protein ligase complex of the DesCEND (destruction via C-end degrons) pathway, which recognizes a C-degron located at the extreme C terminus of target proteins, leading to their ubiquitination and degradation. The C-degron recognized by the DesCEND pathway is usually a motif of less than ten residues and can be present in full-length proteins, truncated proteins or proteolytically cleaved forms. The CRL2(FEM1C) complex specifically recognizes proteins with an arginine at the C-terminus: recognizes and binds proteins ending with -Lys/Arg-Xaa-Arg and -Lys/Arg-Xaa-Xaa-Arg C-degrons, leading to their ubiquitination and degradation. This chain is Protein fem-1 homolog C, found in Danio rerio (Zebrafish).